The primary structure comprises 136 residues: Large ribosomal subunit protein uL16 (136 aa).

The protein belongs to the universal ribosomal protein uL16 family. As to quaternary structure, part of the 50S ribosomal subunit.

Functionally, binds 23S rRNA and is also seen to make contacts with the A and possibly P site tRNAs. In Ehrlichia ruminantium (strain Gardel), this protein is Large ribosomal subunit protein uL16.